A 659-amino-acid polypeptide reads, in one-letter code: MAKSEGRKSASQDTSENGMENPGLELMEVGNLEQGKTLEEVTQGHSLKDGLGHSSLWRRILQPFTKARSFYQRHAGLFKKILLGLLCLAYAAYLLAACILNFRRALALFVITCLVIFILACHFLKKFFAKKSIRCLKPLKNTRLRLWLKRVFMGAAVVGLILWLALDTAQRPEQLISFAGICMFILILFACSKHHSAVSWRTVFWGLGLQFVFGILVIRTEPGFNAFQWLGDQIQIFLAYTVEGSSFVFGDTLVQSVFAFQSLPIIIFFGCVMSILYYLGLVQWVIQKIAWFLQITMGTTAAETLAVAGNIFVGMTEAPLLIRPYLADMTLSEIHAVMTGGFATIAGTVLGAFISFGIDASSLISASVMAAPCALALSKLVYPEVEESKFKSKEGVKLPRGEERNILEAASNGATDAIALVANVAANLIAFLAVLAFINSTLSWLGEMVDIHGLTFQVICSYVLRPMVFMMGVQWADCPLVAEIVGVKFFINEFVAYQQLSQYKNKRLSGVEEWINGEKQWISVKAEIIATFSLCGFANLTSIGITLGGLTSMVPQRKSDLCKLVVRALFTGACVSFISACMAGILYVPRGAETDCVSFLNTNFTNRTYETYVCCRELFQSTLLNGTNMPSFSGPWQDKESSLRNLAKCCDLYTSTVCA.

The segment covering 1 to 10 (MAKSEGRKSA) has biased composition (basic and acidic residues). The tract at residues 1-22 (MAKSEGRKSASQDTSENGMENP) is disordered. Residue S46 is modified to Phosphoserine. A run of 14 helical transmembrane segments spans residues 81 to 101 (ILLGLLCLAYAAYLLAACILN), 105 to 124 (ALALFVITCLVIFILACHFL), 149 to 167 (KRVFMGAAVVGLILWLALD), 173 to 193 (EQLISFAGICMFILILFACSK), 201 to 221 (RTVFWGLGLQFVFGILVIRTE), 234 to 254 (IQIFLAYTVEGSSFVFGDTLV), 261 to 281 (QSLPIIIFFGCVMSILYYLGL), 296 to 315 (TMGTTAAETLAVAGNIFVGM), 337 to 356 (VMTGGFATIAGTVLGAFISF), 363 to 382 (LISASVMAAPCALALSKLVY), 424 to 444 (VAANLIAFLAVLAFINSTLSW), 455 to 475 (TFQVICSYVLRPMVFMMGVQW), 530 to 550 (ATFSLCGFANLTSIGITLGGL), and 568 to 588 (ALFTGACVSFISACMAGILYV).

This sequence belongs to the concentrative nucleoside transporter (CNT) (TC 2.A.41) family. Expressed in liver (in bile canalicular membrane vesicles (CMV) but not in sinusoidal vesicles), jejunum, spleen and heart. Also expressed in brain and skeletal muscle. Not expressed in kidney, muscle and lung.

The protein localises to the membrane. It is found in the apicolateral cell membrane. The catalysed reaction is adenosine(out) + Na(+)(out) = adenosine(in) + Na(+)(in). It catalyses the reaction inosine(out) + Na(+)(out) = inosine(in) + Na(+)(in). The enzyme catalyses guanosine(out) + Na(+)(out) = guanosine(in) + Na(+)(in). It carries out the reaction uridine(out) + Na(+)(out) = uridine(in) + Na(+)(in). With respect to regulation, inhibited by formycin B, partially inhibited by purine analog ara-A. In terms of biological role, sodium-dependent and purine-selective. Exhibits the transport characteristics of the nucleoside transport system cif or N1 subtype (N1/cif) (selective for purine nucleosides and uridine). Accepts purine, analogs of purine nucleosides and uridine, and exhibits high affinity for adenosine. May contribute to regulate the transport of organic compounds in testes across the blood-testis-barrier. The chain is Sodium/nucleoside cotransporter 2 (Slc28a2) from Rattus norvegicus (Rat).